Consider the following 96-residue polypeptide: Co-chaperonin GroES (96 aa).

This sequence belongs to the GroES chaperonin family. Heptamer of 7 subunits arranged in a ring. Interacts with the chaperonin GroEL.

It localises to the cytoplasm. In terms of biological role, together with the chaperonin GroEL, plays an essential role in assisting protein folding. The GroEL-GroES system forms a nano-cage that allows encapsulation of the non-native substrate proteins and provides a physical environment optimized to promote and accelerate protein folding. GroES binds to the apical surface of the GroEL ring, thereby capping the opening of the GroEL channel. The sequence is that of Co-chaperonin GroES from Herminiimonas arsenicoxydans.